The sequence spans 132 residues: Protein LH2 (132 aa).

The polypeptide is Protein LH2 (Pantherophis guttatus (Corn snake)).